The chain runs to 395 residues: ATP phosphoribosyltransferase regulatory subunit (395 aa).

The protein belongs to the class-II aminoacyl-tRNA synthetase family. HisZ subfamily. Heteromultimer composed of HisG and HisZ subunits.

Its subcellular location is the cytoplasm. The protein operates within amino-acid biosynthesis; L-histidine biosynthesis; L-histidine from 5-phospho-alpha-D-ribose 1-diphosphate: step 1/9. Its function is as follows. Required for the first step of histidine biosynthesis. May allow the feedback regulation of ATP phosphoribosyltransferase activity by histidine. The chain is ATP phosphoribosyltransferase regulatory subunit from Pseudomonas entomophila (strain L48).